The following is a 245-amino-acid chain: High affinity immunoglobulin epsilon receptor subunit alpha (245 aa).

An N-terminal signal peptide occupies residues 1–23 (MDTGGSARLCLALVLISLGVMLT). The Extracellular portion of the chain corresponds to 24–204 (ATQKSVVSLD…DYTIEYRWLQ (181 aa)). 2 consecutive Ig-like domains span residues 28–103 (SVVS…KPVY) and 113–181 (LQSS…LNKV). C49 and C91 are joined by a disulfide. N-linked (GlcNAc...) asparagine glycosylation is found at N52, N53, N58, N65, N123, N158, and N167. Cysteines 130 and 174 form a disulfide. The helical transmembrane segment at 205–223 (LIFPSLAVILFAVDTGLWF) threads the bilayer. The Cytoplasmic segment spans residues 224–245 (STHKQFESILKIQKTGKGKKKG).

Tetramer of an alpha chain, a beta chain, and two disulfide linked gamma chains. Interacts with IGHE (via CH3 region). As to expression, expressed in leukocytes and pinealocytes at night (at protein level).

It is found in the cell membrane. The protein resides in the secreted. High-affinity receptor for immunoglobulin epsilon/IgE. Mediates IgE effector functions in myeloid cells. Upon IgE binding and antigen/allergen cross-linking initiates signaling pathways that lead to myeloid cell activation and differentiation. On mast cells, basophils and eosinophils stimulates the secretion of vasoactive amines, lipid mediators and cytokines that contribute to inflammatory response, tissue remodeling and cytotoxicity against microbes. Triggers the immediate hypersensitivity response to allergens as a host defense mechanism against helminth parasites, pathogenic bacteria and venom toxicity. When dysregulated, it can elicit harmful life-threatening allergic and anaphylactic reactions. This chain is High affinity immunoglobulin epsilon receptor subunit alpha (Fcer1a), found in Rattus norvegicus (Rat).